The following is a 253-amino-acid chain: Sporulation initiation inhibitor protein Soj (253 aa).

Positions 11, 12, 13, 14, 15, 16, 17, 18, 214, and 216 each coordinate ATP. Threonine 17 is a binding site for Mg(2+).

This sequence belongs to the ParA family. As to quaternary structure, dimerizes in the presence of ATP but not ADP; ATP-binding is required for double-stranded (ds)DNA-binding. Interacts with DnaA.

Its subcellular location is the cytoplasm. It catalyses the reaction ATP + H2O = ADP + phosphate + H(+). Its function is as follows. Acts as a spatially regulated molecular switch, capable of either inhibiting or activating the ability of DnaA to initiate DNA replication. Monomeric ADP-Soj inhibits oligomerization of DnaA on single-stranded (ss)- or double-stranded (ds)DNA, thus inhibiting DNA replication initiation; does not disassemble premade DnaA-DNA filaments. Decreases the residence time of DnaA on the chromosome at its binding sites (oriC, replication forks and (probably) promoter-binding sites). Soj forms nucleoprotein filaments in an ATP- and DNA-dependent manner. Inhibits the initiation of sporulation, Spo0J antagonizes this inhibition. Soj ultimately inhibits the activation (phosphorylation) of Spo0A. The protein is Sporulation initiation inhibitor protein Soj of Bacillus subtilis (strain 168).